The chain runs to 64 residues: Large ribosomal subunit protein bL35 (64 aa).

Residues M1–K15 show a composition bias toward basic residues. The disordered stretch occupies residues M1 to L23.

The protein belongs to the bacterial ribosomal protein bL35 family.

The protein is Large ribosomal subunit protein bL35 of Rhodococcus jostii (strain RHA1).